The following is a 491-amino-acid chain: Cysteine--tRNA ligase (491 aa).

Residue Cys29 coordinates Zn(2+). Residues 31–41 (PTVYDFAHIGN) carry the 'HIGH' region motif. The Zn(2+) site is built by Cys227, His252, and Glu256. The 'KMSKS' region signature appears at 285–289 (KMSKS). ATP is bound at residue Lys288.

The protein belongs to the class-I aminoacyl-tRNA synthetase family. As to quaternary structure, monomer. Zn(2+) is required as a cofactor.

Its subcellular location is the cytoplasm. The enzyme catalyses tRNA(Cys) + L-cysteine + ATP = L-cysteinyl-tRNA(Cys) + AMP + diphosphate. The chain is Cysteine--tRNA ligase from Rhodopseudomonas palustris (strain TIE-1).